The primary structure comprises 461 residues: General transcription and DNA repair factor IIH subunit SSL1 (461 aa).

Residues M1–S70 are disordered. The span at V26–D37 shows a compositional bias: basic and acidic residues. Basic residues predominate over residues H53–S63. Positions S125 to A304 constitute a VWFA domain. The C4-type zinc finger occupies C349 to C366.

It belongs to the GTF2H2 family. In terms of assembly, component of the 7-subunit TFIIH core complex composed of XPB/SSL2, XPD/RAD3, SSL1, TFB1, TFB2, TFB4 and TFB5, which is active in NER. The core complex associates with the 3-subunit CTD-kinase module TFIIK composed of CCL1, KIN28 and TFB3 to form the 10-subunit holoenzyme (holo-TFIIH) active in transcription. An additionnal subunit, TFB6, plays a role in the dissociation of the SSL2 helicase from TFIIH after transcription initiation.

Its subcellular location is the nucleus. Functionally, component of the general transcription and DNA repair factor IIH (TFIIH) core complex, which is involved in general and transcription-coupled nucleotide excision repair (NER) of damaged DNA and, when complexed to TFIIK, in RNA transcription by RNA polymerase II. In NER, TFIIH acts by opening DNA around the lesion to allow the excision of the damaged oligonucleotide and its replacement by a new DNA fragment. In transcription, TFIIH has an essential role in transcription initiation. When the pre-initiation complex (PIC) has been established, TFIIH is required for promoter opening and promoter escape. Phosphorylation of the C-terminal tail (CTD) of the largest subunit of RNA polymerase II by the kinase module TFIIK controls the initiation of transcription. The polypeptide is General transcription and DNA repair factor IIH subunit SSL1 (SSL1) (Saccharomyces cerevisiae (strain ATCC 204508 / S288c) (Baker's yeast)).